Consider the following 170-residue polypeptide: Putative beta-eliminating lyase-like protein (170 aa).

Position 32 is an N6-(pyridoxal phosphate)lysine (lysine 32).

Belongs to the beta-eliminating lyase family. Pyridoxal 5'-phosphate serves as cofactor.

This chain is Putative beta-eliminating lyase-like protein, found in Dictyostelium discoideum (Social amoeba).